Consider the following 236-residue polypeptide: Phosphoribosylaminoimidazole-succinocarboxamide synthase (236 aa).

The protein belongs to the SAICAR synthetase family.

It catalyses the reaction 5-amino-1-(5-phospho-D-ribosyl)imidazole-4-carboxylate + L-aspartate + ATP = (2S)-2-[5-amino-1-(5-phospho-beta-D-ribosyl)imidazole-4-carboxamido]succinate + ADP + phosphate + 2 H(+). The protein operates within purine metabolism; IMP biosynthesis via de novo pathway; 5-amino-1-(5-phospho-D-ribosyl)imidazole-4-carboxamide from 5-amino-1-(5-phospho-D-ribosyl)imidazole-4-carboxylate: step 1/2. This is Phosphoribosylaminoimidazole-succinocarboxamide synthase from Rickettsia africae (strain ESF-5).